A 396-amino-acid chain; its full sequence is MTINPVSRKVAWLRVVTLAIAAFIFNTTEFVPVGLLSDIAESFHMQTAQVGIMLTIYAWVVAVMSLPFMLLTSQMERRKLLIYLFVLFIASHVLSFLAWNFTVLVISRIGIAFAHAIFWSITASLAIRLAPAGKRAQALSLIATGTALAMVLGLPIGRVVGQYFGWRTTFFAIGMGALITLLCLIKLLPKLPSEHSGSLKSLPLLFRRPALMSLYVLTVVVVTAHYTAYSYIEPFVQNVAGLSANFATVLLLILGGAGIIGSLVFGKLGNRHASSLVSIAIALLVVCLLLLLPAAESEAHLAILSIFWGIAIMVIGLGMQVKVLALAPDATDVAMALFSGIFNIGIGAGALVGNQVSLHWSMSAIGYIGAIPACAALVWAVLIFRKWPVTLEEQPH.

Over 1-14 (MTINPVSRKVAWLR) the chain is Cytoplasmic. The helical transmembrane segment at 15-35 (VVTLAIAAFIFNTTEFVPVGL) threads the bilayer. The Periplasmic segment spans residues 36 to 49 (LSDIAESFHMQTAQ). Residues 50–70 (VGIMLTIYAWVVAVMSLPFML) traverse the membrane as a helical segment. Residues 71-80 (LTSQMERRKL) lie on the Cytoplasmic side of the membrane. The helical transmembrane segment at 81–101 (LIYLFVLFIASHVLSFLAWNF) threads the bilayer. Position 102 (Thr102) is a topological domain, periplasmic. The helical transmembrane segment at 103 to 123 (VLVISRIGIAFAHAIFWSITA) threads the bilayer. Topologically, residues 124–135 (SLAIRLAPAGKR) are cytoplasmic. The chain crosses the membrane as a helical span at residues 136–156 (AQALSLIATGTALAMVLGLPI). At 157–168 (GRVVGQYFGWRT) the chain is on the periplasmic side. The helical transmembrane segment at 169–189 (TFFAIGMGALITLLCLIKLLP) threads the bilayer. Residues 190–208 (KLPSEHSGSLKSLPLLFRR) lie on the Cytoplasmic side of the membrane. A helical transmembrane segment spans residues 209-229 (PALMSLYVLTVVVVTAHYTAY). Topologically, residues 230 to 245 (SYIEPFVQNVAGLSAN) are periplasmic. Residues 246-266 (FATVLLLILGGAGIIGSLVFG) form a helical membrane-spanning segment. Topologically, residues 267 to 274 (KLGNRHAS) are cytoplasmic. Residues 275 to 295 (SLVSIAIALLVVCLLLLLPAA) traverse the membrane as a helical segment. At 296–300 (ESEAH) the chain is on the periplasmic side. Residues 301-321 (LAILSIFWGIAIMVIGLGMQV) form a helical membrane-spanning segment. Topologically, residues 322 to 332 (KVLALAPDATD) are cytoplasmic. The helical transmembrane segment at 333-353 (VAMALFSGIFNIGIGAGALVG) threads the bilayer. The Periplasmic segment spans residues 354-363 (NQVSLHWSMS). A helical transmembrane segment spans residues 364-384 (AIGYIGAIPACAALVWAVLIF). Over 385–396 (RKWPVTLEEQPH) the chain is Cytoplasmic.

This sequence belongs to the major facilitator superfamily. SotB (TC 2.A.1.2) family.

It localises to the cell inner membrane. In terms of biological role, involved in the efflux of sugars. The physiological role may be the reduction of the intracellular concentration of toxic sugars or sugar metabolites. This Salmonella typhimurium (strain LT2 / SGSC1412 / ATCC 700720) protein is Probable sugar efflux transporter.